The following is a 728-amino-acid chain: Catalase-peroxidase (728 aa).

The tryptophyl-tyrosyl-methioninium (Trp-Tyr) (with M-244) cross-link spans 91–218; that stretch reads WHSAGTYRTA…LAAVQMGLIY (128 aa). The active-site Proton acceptor is His-92. A cross-link (tryptophyl-tyrosyl-methioninium (Tyr-Met) (with W-91)) is located at residues 218–244; sequence YVNPEGPDGNPDPVAAARDIRDTFARM. His-259 lines the heme b pocket.

This sequence belongs to the peroxidase family. Peroxidase/catalase subfamily. Homodimer or homotetramer. The cofactor is heme b. In terms of processing, formation of the three residue Trp-Tyr-Met cross-link is important for the catalase, but not the peroxidase activity of the enzyme.

The enzyme catalyses H2O2 + AH2 = A + 2 H2O. The catalysed reaction is 2 H2O2 = O2 + 2 H2O. Its function is as follows. Bifunctional enzyme with both catalase and broad-spectrum peroxidase activity. This chain is Catalase-peroxidase, found in Burkholderia pseudomallei (strain 1710b).